Reading from the N-terminus, the 338-residue chain is Bifunctional methylenetetrahydrofolate dehydrogenase/cyclohydrolase 2, mitochondrial (338 aa).

Substrate-binding positions include 89–93 (YVRNK) and 136–138 (VQL). Residues 205 to 207 (GRS) and Arg-238 contribute to the NAD(+) site. Substrate is bound at residue 314-318 (PGGVG).

Belongs to the tetrahydrofolate dehydrogenase/cyclohydrolase family. The cofactor is Mg(2+). As to expression, widely expressed.

The protein resides in the mitochondrion inner membrane. The catalysed reaction is (6R)-5,10-methylene-5,6,7,8-tetrahydrofolate + NAD(+) = (6R)-5,10-methenyltetrahydrofolate + NADH. The enzyme catalyses (6R)-5,10-methenyltetrahydrofolate + H2O = (6R)-10-formyltetrahydrofolate + H(+). It catalyses the reaction (6R)-5,10-methylene-5,6,7,8-tetrahydrofolate + NADP(+) = (6R)-5,10-methenyltetrahydrofolate + NADPH. The protein operates within one-carbon metabolism; tetrahydrofolate interconversion. Bifunctional mitochondrial folate-interconverting enzyme that has both NAD/NADP-dependent methylenetetrahydrofolate dehydrogenase and methenyltetrahydrofolate cyclohydrolase activities. This Mus musculus (Mouse) protein is Bifunctional methylenetetrahydrofolate dehydrogenase/cyclohydrolase 2, mitochondrial.